The chain runs to 205 residues: Protein TON_1965 (205 aa).

Residues 7 to 201 form the AMMECR1 domain; that stretch reads EWGEFLVRLA…EEYPKGPVKR (195 aa).

This is Protein TON_1965 from Thermococcus onnurineus (strain NA1).